A 432-amino-acid polypeptide reads, in one-letter code: Adenylosuccinate synthetase (432 aa).

GTP-binding positions include 13 to 19 and 41 to 43; these read GDEGKGK and GHT. D14 functions as the Proton acceptor in the catalytic mechanism. Positions 14 and 41 each coordinate Mg(2+). IMP contacts are provided by residues 14-17, 39-42, T130, R144, Q225, T240, and R304; these read DEGK and NAGH. The active-site Proton donor is H42. 300–306 is a substrate binding site; the sequence is ATTGRRR. GTP-binding positions include R306, 332-334, and 415-417; these read KLD and STG.

Belongs to the adenylosuccinate synthetase family. Homodimer. It depends on Mg(2+) as a cofactor.

The protein localises to the cytoplasm. It carries out the reaction IMP + L-aspartate + GTP = N(6)-(1,2-dicarboxyethyl)-AMP + GDP + phosphate + 2 H(+). Its pathway is purine metabolism; AMP biosynthesis via de novo pathway; AMP from IMP: step 1/2. Plays an important role in the de novo pathway of purine nucleotide biosynthesis. Catalyzes the first committed step in the biosynthesis of AMP from IMP. This Erwinia tasmaniensis (strain DSM 17950 / CFBP 7177 / CIP 109463 / NCPPB 4357 / Et1/99) protein is Adenylosuccinate synthetase.